A 343-amino-acid polypeptide reads, in one-letter code: Dipeptide transport system permease protein DppC (343 aa).

A run of 5 helical transmembrane segments spans residues 44–64 (LVAM…AFVV), 144–164 (LIIA…YGII), 195–215 (LALL…LFAW), 259–279 (GVIV…EAVL), and 309–329 (FQLI…IFFG). An ABC transmembrane type-1 domain is found at 140 to 329 (LRISLIIALA…VLSLTFIFFG (190 aa)).

This sequence belongs to the binding-protein-dependent transport system permease family. OppBC subfamily. As to quaternary structure, the complex is composed of two ATP-binding proteins (DppD and DppF), two transmembrane proteins (DppB and DppC) and a solute-binding protein (DppA).

Its subcellular location is the cell membrane. Functionally, part of the ABC transporter DppABCDF involved in dipeptide transport. Responsible for the translocation of the substrate across the membrane. This Lactococcus lactis subsp. cremoris (strain MG1363) protein is Dipeptide transport system permease protein DppC.